Here is a 132-residue protein sequence, read N- to C-terminus: Large ribosomal subunit protein bL19 (132 aa).

The protein belongs to the bacterial ribosomal protein bL19 family.

Functionally, this protein is located at the 30S-50S ribosomal subunit interface and may play a role in the structure and function of the aminoacyl-tRNA binding site. This Persephonella marina (strain DSM 14350 / EX-H1) protein is Large ribosomal subunit protein bL19.